The following is a 518-amino-acid chain: Arrestin-related trafficking adapter 10 (518 aa).

K118 is covalently cross-linked (Glycyl lysine isopeptide (Lys-Gly) (interchain with G-Cter in ubiquitin)).

This sequence belongs to the ART10 family. In terms of assembly, interacts with RSP5. Ubiquitinated by RSP5.

It is found in the cytoplasm. May regulate endocytosis by recruiting RSP5 ubiquitin ligase activity to specific plasma membrane proteins in response to extracellular stimuli. The chain is Arrestin-related trafficking adapter 10 (ART10) from Saccharomyces cerevisiae (strain Lalvin EC1118 / Prise de mousse) (Baker's yeast).